The sequence spans 350 residues: Aminomethyltransferase (350 aa).

This sequence belongs to the GcvT family. In terms of assembly, the glycine cleavage system is composed of four proteins: P, T, L and H.

The catalysed reaction is N(6)-[(R)-S(8)-aminomethyldihydrolipoyl]-L-lysyl-[protein] + (6S)-5,6,7,8-tetrahydrofolate = N(6)-[(R)-dihydrolipoyl]-L-lysyl-[protein] + (6R)-5,10-methylene-5,6,7,8-tetrahydrofolate + NH4(+). Its function is as follows. The glycine cleavage system catalyzes the degradation of glycine. The chain is Aminomethyltransferase from Aquifex aeolicus (strain VF5).